The sequence spans 507 residues: Cytochrome P450 monooxygenase cloA (507 aa).

The helical transmembrane segment at 15 to 35 (WTWILLTTCIALTSPLVLKGI) threads the bilayer. A glycan (N-linked (GlcNAc...) asparagine) is linked at asparagine 247. Heme is bound at residue cysteine 450.

This sequence belongs to the cytochrome P450 family. Requires heme as cofactor.

It is found in the membrane. The protein operates within alkaloid biosynthesis; ergot alkaloid biosynthesis. Functionally, cytochrome P450 monooxygenase; part of the gene cluster that mediates the biosynthesis of fungal ergot alkaloid. DmaW catalyzes the first step of ergot alkaloid biosynthesis by condensing dimethylallyl diphosphate (DMAP) and tryptophan to form 4-dimethylallyl-L-tryptophan. The second step is catalyzed by the methyltransferase easF that methylates 4-dimethylallyl-L-tryptophan in the presence of S-adenosyl-L-methionine, resulting in the formation of 4-dimethylallyl-L-abrine. The catalase easC and the FAD-dependent oxidoreductase easE then transform 4-dimethylallyl-L-abrine to chanoclavine-I which is further oxidized by easD in the presence of NAD(+), resulting in the formation of chanoclavine-I aldehyde. Agroclavine dehydrogenase easG then mediates the conversion of chanoclavine-I aldehyde to agroclavine via a non-enzymatic adduct reaction: the substrate is an iminium intermediate that is formed spontaneously from chanoclavine-I aldehyde in the presence of glutathione. The presence of easA is not required to complete this reaction. Further conversion of agroclavine to paspalic acid is a two-step process involving oxidation of agroclavine to elymoclavine and of elymoclavine to paspalic acid, the second step being performed by the elymoclavine oxidase cloA. Paspalic acid is then further converted to D-lysergic acid. Ergopeptines are assembled from D-lysergic acid and three different amino acids by the D-lysergyl-peptide-synthetases composed each of a monomudular and a trimodular nonribosomal peptide synthetase subunit. LpsB and lpsC encode the monomodular subunits responsible for D-lysergic acid activation and incorporation into the ergopeptine backbone. LpsA1 and A2 subunits encode the trimodular nonribosomal peptide synthetase assembling the tripeptide portion of ergopeptines. LpsA1 is responsible for formation of the major ergopeptine, ergotamine, and lpsA2 for alpha-ergocryptine, the minor ergopeptine of the total alkaloid mixture elaborated by C.purpurea. D-lysergyl-tripeptides are assembled by the nonribosomal peptide synthetases and released as N-(D-lysergyl-aminoacyl)-lactams. Cyclolization of the D-lysergyl-tripeptides is performed by the Fe(2+)/2-ketoglutarate-dependent dioxygenase easH which introduces a hydroxyl group into N-(D-lysergyl-aminoacyl)-lactam at alpha-C of the aminoacyl residue followed by spontaneous condensation with the terminal lactam carbonyl group. The chain is Cytochrome P450 monooxygenase cloA from Claviceps purpurea (Ergot fungus).